The primary structure comprises 73 residues: Putative membrane protein insertion efficiency factor (73 aa).

This sequence belongs to the UPF0161 family.

It localises to the cell inner membrane. In terms of biological role, could be involved in insertion of integral membrane proteins into the membrane. This is Putative membrane protein insertion efficiency factor from Neisseria gonorrhoeae (strain ATCC 700825 / FA 1090).